Reading from the N-terminus, the 118-residue chain is Large ribosomal subunit protein bL19 (118 aa).

It belongs to the bacterial ribosomal protein bL19 family.

This protein is located at the 30S-50S ribosomal subunit interface and may play a role in the structure and function of the aminoacyl-tRNA binding site. This is Large ribosomal subunit protein bL19 from Metamycoplasma arthritidis (strain 158L3-1) (Mycoplasma arthritidis).